The following is a 309-amino-acid chain: Probable cell division protein kinase ECU11_1290 (309 aa).

Residues 4-288 enclose the Protein kinase domain; it reads YENIKQVGEG…VISSHKNTYI (285 aa). ATP is bound by residues 10–18 and lysine 33; that span reads VGEGAFGQV. The Proton acceptor role is filled by aspartate 124.

Belongs to the protein kinase superfamily. CMGC Ser/Thr protein kinase family. CDC2/CDKX subfamily.

The protein resides in the nucleus. It catalyses the reaction L-seryl-[protein] + ATP = O-phospho-L-seryl-[protein] + ADP + H(+). The enzyme catalyses L-threonyl-[protein] + ATP = O-phospho-L-threonyl-[protein] + ADP + H(+). In terms of biological role, may play a role in the control of the eukaryotic cell cycle. This chain is Probable cell division protein kinase ECU11_1290, found in Encephalitozoon cuniculi (strain GB-M1) (Microsporidian parasite).